The sequence spans 190 residues: MKVKKLVVVSMLSSIAFVLMLLNFPFPGLPDYLKIDFSDVPAIIAILIYGPLAGIAVEAIKNVLQYIIQGSMAGVPVGQVANFIAGTLFILPTAFLFKKLNSAKGLAVSLLLGTAAMTILMSILNYVLILPAYTWFLHSPALSDSALKTAVVAGILPFNMIKGIVITVVFSLIFIKLKPWIEQQRSAHIH.

Over 1 to 5 the chain is Extracellular; the sequence is MKVKK. A helical transmembrane segment spans residues 6-26; sequence LVVVSMLSSIAFVLMLLNFPF. Over 27–39 the chain is Cytoplasmic; that stretch reads PGLPDYLKIDFSD. Residues 40 to 60 form a helical membrane-spanning segment; it reads VPAIIAILIYGPLAGIAVEAI. The Extracellular portion of the chain corresponds to 61 to 76; sequence KNVLQYIIQGSMAGVP. The helical transmembrane segment at 77–97 threads the bilayer; sequence VGQVANFIAGTLFILPTAFLF. Topologically, residues 98-109 are cytoplasmic; the sequence is KKLNSAKGLAVS. The chain crosses the membrane as a helical span at residues 110-130; the sequence is LLLGTAAMTILMSILNYVLIL. The Extracellular segment spans residues 131 to 154; the sequence is PAYTWFLHSPALSDSALKTAVVAG. The chain crosses the membrane as a helical span at residues 155 to 175; sequence ILPFNMIKGIVITVVFSLIFI. At 176 to 190 the chain is on the cytoplasmic side; that stretch reads KLKPWIEQQRSAHIH.

It belongs to the prokaryotic riboflavin transporter (P-RFT) (TC 2.A.87) family. Forms a stable energy-coupling factor (ECF) transporter complex composed of a membrane-embedded substrate-binding protein (S component), 2 ATP-binding proteins (A component) and 2 transmembrane proteins (T component). May be able to interact with more than 1 S component at a time.

Its subcellular location is the cell membrane. Inhibited by excess of riboflavin or FMN. Also inhibited by protonophores such as CCCP and FCCP or in the absence of glucose. In terms of biological role, mediates uptake of riboflavin and roseoflavin, a toxic riboflavin analog; may also transport FMN. Probably a riboflavin-binding protein that interacts with the energy-coupling factor (ECF) ABC-transporter complex. Unlike classic ABC transporters this ECF transporter provides the energy necessary to transport a number of different substrates. The substrates themselves are bound by transmembrane, not extracytoplasmic soluble proteins. This is Riboflavin transporter FmnP (fmnP) from Bacillus subtilis (strain 168).